Reading from the N-terminus, the 391-residue chain is Putative 8-amino-7-oxononanoate synthase (391 aa).

Residues Arg-22 and His-135 each coordinate substrate. Pyridoxal 5'-phosphate-binding positions include Ser-183, 208–211 (DDAH), and 239–242 (TLSK). Residue Lys-242 is modified to N6-(pyridoxal phosphate)lysine. Thr-358 lines the substrate pocket.

Belongs to the class-II pyridoxal-phosphate-dependent aminotransferase family. BioF subfamily. Homodimer. Pyridoxal 5'-phosphate is required as a cofactor.

The enzyme catalyses 6-carboxyhexanoyl-[ACP] + L-alanine + H(+) = (8S)-8-amino-7-oxononanoate + holo-[ACP] + CO2. It functions in the pathway cofactor biosynthesis; biotin biosynthesis. Catalyzes the decarboxylative condensation of pimeloyl-[acyl-carrier protein] and L-alanine to produce 8-amino-7-oxononanoate (AON), [acyl-carrier protein], and carbon dioxide. This is Putative 8-amino-7-oxononanoate synthase (bioF) from Thermosynechococcus vestitus (strain NIES-2133 / IAM M-273 / BP-1).